Consider the following 165-residue polypeptide: Small ribosomal subunit protein uS5 (165 aa).

The region spanning 13–76 is the S5 DRBM domain; that stretch reads LEEKVLVVNR…EAARKNLITI (64 aa).

Belongs to the universal ribosomal protein uS5 family. In terms of assembly, part of the 30S ribosomal subunit. Contacts proteins S4 and S8.

Its function is as follows. With S4 and S12 plays an important role in translational accuracy. Located at the back of the 30S subunit body where it stabilizes the conformation of the head with respect to the body. The chain is Small ribosomal subunit protein uS5 from Chlamydia abortus (strain DSM 27085 / S26/3) (Chlamydophila abortus).